A 972-amino-acid polypeptide reads, in one-letter code: MTAEIDPPAYTLVFNPATNSTPNTVAEFQKALEKGSDETKIEAMKEILVTMLEGNPLPEMLMHIIRFVMPSKNKKLKKLLYFYWEIVPKLDQDGKLRHEMILVCNAIQHDLQHPNEFIRGNTLRFLTKLREPELLEQMVPSTLACLEYRHAYVRKYAILAVLSIYKVSEHLLPDAKEIINTFLLAETDPICKRNAFLGLSELDRDNALQYLQDNIDDIESLDPLLQAAFVQFIRKDAIQTPALKSQYCDLLLELLASATADEVVFETALALTILSGNQTVLIKAVSKMIDLAVKVSDNNVKIIVLDRIQDINERNPGCLEELTLDILRVLNAEDIDVRSKALTIAMDLVTSRNIEDVVQLLKKELQTTVINNEKEKSSDYRSLLIKTIRGIAVRFEEIAANIVSLLLDFITDLNSVAANGVIAFVKDVVELYPQLRSNILENLIAKLESVNSAKAYRGALWILGEYSTTESEIQDSWKHIRQSIGEIPILQTELKNQRKSQDEDDEATEESATKQAGPVILPDGTYATENAFGSSNNDNKKKLVENENRPPLRRFVLGGDFYTASILASTIVKLVLRFEKVSERAAVLNALKAEGLLMLVSIIRVGESSIVEKNIDEDSQERITTAIAILMDESNPDESSAERELLNIAFLDATKASFKGQFVAQKKTKLFKSSPVRKHKEAIDQSVSFRLLQENDNTAVSGDAIDEDLQLAIRGDAARDTSSIAISKLKKIVPLTGFSDPVYAEACITTNQFDVVLDVLLVNQTKETLKNFHVQFATLGDLKIVENPPATNVVPHGFHRVSVTVKVSSADTGVIFGNIIYDGGHGQDARYVILNDVHVDLMDYIKPAKTDDESFRTMWNAFEWENKISVKSKLPSLHAYLDELIKGTNMGVLTPVESLGEKDCRFLCCNLYARSSFGEDALANLCIELDPNTEQVVGYVRIRSKGQGLALSLGDRVALIAKQNNKVIVGHV.

HEAT repeat units follow at residues 79–113 (LLYFYWEIVPKLDQDGKLRHEMILVCNAIQHDLQH), 133–170 (ELLEQMVPSTLACLEYRHAYVRKYAILAVLSIYKVSEH), 317–354 (GCLEELTLDILRVLNAEDIDVRSKALTIAMDLVTSRNI), 397–434 (EIAANIVSLLLDFITDLNSVAANGVIAFVKDVVELYPQ), and 481–518 (RQSIGEIPILQTELKNQRKSQDEDDEATEESATKQAGP). The interval 494-522 (LKNQRKSQDEDDEATEESATKQAGPVILP) is disordered.

As to quaternary structure, oligomeric complex that consists of at least the alpha, beta, beta', gamma, delta, epsilon and zeta subunits.

It is found in the cytoplasm. The protein localises to the golgi apparatus membrane. Its subcellular location is the cytoplasmic vesicle. The protein resides in the COPI-coated vesicle membrane. The coatomer is a cytosolic protein complex that binds to dilysine motifs and reversibly associates with Golgi non-clathrin-coated vesicles, which further mediate biosynthetic protein transport from the ER, via the Golgi up to the trans Golgi network. Coatomer complex is required for budding from Golgi membranes, and is essential for the retrograde Golgi-to-ER transport of dilysine-tagged proteins. The chain is Coatomer subunit beta from Candida glabrata (strain ATCC 2001 / BCRC 20586 / JCM 3761 / NBRC 0622 / NRRL Y-65 / CBS 138) (Yeast).